A 479-amino-acid chain; its full sequence is Ammonium transporter Rh type C (479 aa).

The Cytoplasmic portion of the chain corresponds to 1-9 (MAWNTNLRW). Residues 10–30 (RLPLTCLLLQVAMVILFGVFV) form a helical membrane-spanning segment. Residues 31–60 (RYDFDADAHWWTERKHKNLSEVENEFYYRY) lie on the Extracellular side of the membrane. N-linked (GlcNAc...) asparagine glycosylation occurs at asparagine 48. The helical transmembrane segment at 61–81 (PSFQDVHVMVFVGFGFLMTFL) threads the bilayer. Residues 82-85 (QRYG) lie on the Cytoplasmic side of the membrane. A helical membrane pass occupies residues 86–106 (FSAVGFNFLLAAFGIQWALLM). Topologically, residues 107-123 (QGWFHFLEGRYIVVGVE) are extracellular. The helical transmembrane segment at 124–144 (NLINADFCVASVCVAFGAVLG) threads the bilayer. Topologically, residues 145–148 (KVSP) are cytoplasmic. The helical transmembrane segment at 149-169 (IQLLIMTFFQVTLFAVNEFIL) threads the bilayer. Residues 170–177 (LNLLKVKD) lie on the Extracellular side of the membrane. The chain crosses the membrane as a helical span at residues 178–200 (AGGSMTIHTFYAYFELTVTRILY). The Cytoplasmic portion of the chain corresponds to 201–218 (RRNLEQSKERQSSAYQSD). A helical transmembrane segment spans residues 219–239 (LFAMIGTLFLWMYWPSFNSAI). The Extracellular segment spans residues 240–250 (SYHGDSQHRAA). A helical transmembrane segment spans residues 251–271 (INTYCSLAACVLTSVAVSSAL). Over 272-281 (HKKGKLDMVH) the chain is Cytoplasmic. Residues 282–302 (IQNATLAGGVAVGTTAEMMLM) traverse the membrane as a helical segment. Proline 303 is a topological domain (extracellular). A helical transmembrane segment spans residues 304–324 (YGALIIGFICGIISTLGFVYL). Topologically, residues 325-345 (TPFLESRLHIQDTCGINNLHG) are cytoplasmic. The helical transmembrane segment at 346 to 366 (IPGIIGGIVGAVTAASASLEV) threads the bilayer. The Extracellular segment spans residues 367–394 (YGKEGLVHSFDFQDFKRDWTARTQGKFQ). Residues 395-415 (IYGLLVTLAMALMGGIIVGLI) form a helical membrane-spanning segment. Over 416–479 (LRLPFWGQPS…PMASSVPLVP (64 aa)) the chain is Cytoplasmic.

It belongs to the ammonium transporter (TC 2.A.49) family. Rh subfamily. Homotrimer. In terms of processing, N-glycosylated.

It is found in the apical cell membrane. The catalysed reaction is NH4(+)(in) = NH4(+)(out). The enzyme catalyses methylamine(out) = methylamine(in). It carries out the reaction CO2(out) = CO2(in). Functionally, ammonium transporter involved in the maintenance of acid-base homeostasis. Transports ammonium and its related derivative methylammonium across the plasma membrane of epithelial cells likely contributing to renal transepithelial ammonia transport and ammonia metabolism. Postulated to primarily mediate an electroneutral bidirectional transport of NH3 ammonia species according to a mechanism that implies interaction of an NH4(+) ion with acidic residues of the pore entry followed by dissociation of NH4(+) into NH3 and H(+). As a result NH3 transits through the central pore and is protonated on the extracellular side reforming NH4(+). May act as a CO2 channel providing for renal acid secretion. The polypeptide is Ammonium transporter Rh type C (RHCG) (Macaca mulatta (Rhesus macaque)).